We begin with the raw amino-acid sequence, 522 residues long: Major facilitator-type transporter sorT (522 aa).

Residues 1 to 21 (MSHTEPKAPVNTGEVENGHLY) form a disordered region. 12 consecutive transmembrane segments (helical) span residues 52–72 (WFIAAIATLSVFAVTFTSSAY), 89–109 (VFIVGLSLFVLGFAIGPAVWA), 121–141 (QILWIITHIAMVAFLGGSAGS), 143–163 (NVATLLILRFFAGTFGGSPLV), 183–203 (TIYCVAPFLGPILGPIVGGFV), 211–231 (WVQGVCVIFIGVVGILGIVFI), 280–300 (WIFLFLEPIVLIASVYMAIIY), 324–344 (IGGLAFLGIAVGIIFGLVYAI), 366–386 (LPPAIVGGVALPIGMFAFAWT), 395–415 (VSIILSAPFGFGCVLVILPIM), 427–447 (ASVLAAAAIFRSVVGAVFPLF), and 457–477 (IHWASSIPAFLTLLCMPFPLI).

This sequence belongs to the major facilitator superfamily. Sugar transporter (TC 2.A.1.1) family.

It localises to the membrane. Its function is as follows. Major facilitator-type transporter; part of the gene cluster that mediates the biosynthesis of sorbicillinoids, a diverse group of yellow secondary metabolites that restrict growth of competing pathogenic fungi but not of bacteria. The polypeptide is Major facilitator-type transporter sorT (Penicillium rubens (strain ATCC 28089 / DSM 1075 / NRRL 1951 / Wisconsin 54-1255) (Penicillium chrysogenum)).